Consider the following 85-residue polypeptide: Large ribosomal subunit protein bL27 (85 aa).

Residues 1–22 (MAHKKAGGSTRNGRDSESKRLG) form a disordered region.

Belongs to the bacterial ribosomal protein bL27 family.

In Teredinibacter turnerae (strain ATCC 39867 / T7901), this protein is Large ribosomal subunit protein bL27.